The chain runs to 383 residues: Geranylgeranyl pyrophosphate synthase esdpD (383 aa).

Isopentenyl diphosphate is bound by residues lysine 88, arginine 91, and histidine 120. 2 residues coordinate Mg(2+): aspartate 150 and aspartate 154. Arginine 159 is a dimethylallyl diphosphate binding site. Arginine 160 is a binding site for isopentenyl diphosphate. Lysine 237, threonine 238, and glutamine 271 together coordinate dimethylallyl diphosphate. Aspartate 274 is a Mg(2+) binding site. Dimethylallyl diphosphate contacts are provided by asparagine 278, lysine 288, and lysine 298.

This sequence belongs to the FPP/GGPP synthase family. Mg(2+) is required as a cofactor.

It carries out the reaction isopentenyl diphosphate + dimethylallyl diphosphate = (2E)-geranyl diphosphate + diphosphate. The catalysed reaction is isopentenyl diphosphate + (2E)-geranyl diphosphate = (2E,6E)-farnesyl diphosphate + diphosphate. The enzyme catalyses isopentenyl diphosphate + (2E,6E)-farnesyl diphosphate = (2E,6E,10E)-geranylgeranyl diphosphate + diphosphate. It functions in the pathway secondary metabolite biosynthesis; terpenoid biosynthesis. Geranylgeranyl pyrophosphate synthase; part of the cluster that mediates the biosynthesis of shearones, diterpenoid pyrones (DPs) which are structurally diverse meroterpenoids consisting of a diterpene linked by a pyrone, and which may exhibit a range of bioactivities. Within the pathway, esdpD takes part to the biosynthesis of the molecular scaffold by providing geranylgeranyl pyrophosphate (GGPP) to the prenyltransferase esdpC for C-3 geranylgeranylation of the alpha-pyrone. The molecular scaffold is commonly biosynthesized by a series of enzymes including the non-reducing polyketide synthase (NR-PKS) esdpA that generates an alpha-pyrone; the prenyltransferase esdpC that attaches a geranylgeranyl pyrophosphate (GGPP) produced by the GGPP synthase (GGPPS) esdpD onto the pyrone unit; the FAD-dependent monooxygenase esdpE that converts an olefin on the diterpene unit into an epoxide; and the terpene cyclase esdpB that catalyzes the cyclization reactions to give the molecular backbone shearone A. In the modification steps, esdpF oxidizes the hydroxy group to a ketone at C-3 and esdpG then attaches hydroxy groups at both C-11 and C-12. After that, esdpI hydroxylates at C-20 and esdpH hydroxylates at C-6'. The ether bridge is generated by nucleophilic attack of the hydroxy group at C-20 to the carbonyl carbon at C-3. EsdpH can also functions prior to esdpI. The different combinations of these modification enzymes lead to the production of diverse shearone derivatives, shearone I being the end product of the pathway. The alpha-ketoglutarate-dependent dioxygenase esdpJ seems not to be involved in this pathway. This Penicillium shearii (Eupenicillium shearii) protein is Geranylgeranyl pyrophosphate synthase esdpD.